A 2797-amino-acid chain; its full sequence is Nonribosomal peptide synthetase penN (2797 aa).

An adenylation 1 region spans residues 239–625 (SRPDHPAICA…ARKDSQVKIR (387 aa)). The region spanning 751-824 (TDTERHVHRF…DIVSLVRTAT (74 aa)) is the Carrier 1 domain. An O-(pantetheine 4'-phosphoryl)serine modification is found at serine 785. Residues 830–856 (PSAGAEISRSDAPTESPATGSFEGSGY) are disordered. Residues 870-1299 (QSFSQARMWF…DIEIGSLLLT (430 aa)) form a condensation 1 region. The adenylation 2 stretch occupies residues 1328–1731 (FHQQVAAHGD…GRMDQQVKIR (404 aa)). The tract at residues 1857–1953 (LEIGTGTGMI…VIKQLIQLHD (97 aa)) is methyltransferase. One can recognise a Carrier 2 domain in the interval 2277–2351 (SFTDDIERAM…RLAGRVRGFR (75 aa)). The residue at position 2311 (serine 2311) is an O-(pantetheine 4'-phosphoryl)serine. Residues 2516–2658 (YDGISLSSIL…VNRTLIRVQL (143 aa)) form a condensation 2 region.

Belongs to the NRP synthetase family.

The catalysed reaction is O-methyl-L-tyrosine + anthranilate + S-adenosyl-L-methionine + 2 ATP = (-)-4'-methoxycyclopeptine + 2 AMP + S-adenosyl-L-homocysteine + 2 diphosphate + 2 H(+). It catalyses the reaction anthranilate + L-phenylalanine + S-adenosyl-L-methionine + 2 ATP = cyclopeptine + 2 AMP + S-adenosyl-L-homocysteine + 2 diphosphate + 2 H(+). It functions in the pathway secondary metabolite biosynthesis. The protein operates within alkaloid biosynthesis. It participates in mycotoxin biosynthesis. In terms of biological role, nonribosomal peptide synthetase; part of the gene cluster that mediates the biosynthesis of penigequinolones, potent insecticidal alkaloids that contain a highly modified 10-carbon prenyl group. The first stage is catalyzed by the nonribosomal peptide synthetase penN that condenses anthranilic acid and O-methyl-L-tyrosine to produce 4'-methoxycyclopeptin. 4'-methoxycyclopeptin is then converted to 4'-methoxydehydrocyclopeptin by the ketoglutarate-dependent dioxygenase penM through dehydrogenation to form a double bond between C-alpha and C-beta of the O-methyltyrosine side chain. PenM also converts its first product methoxydehydrocyclopeptin to 4'-methoxycyclopenin. The following conversion of 4'methoxycyclopenin into 4'-methoxyviridicatin is catalyzed by the cyclopenase penL. 4'-methoxyviridicatin is the precursor of quinolone natural products, and is further converted to quinolinone B. The prenyltransferase penI then catalyzes the canonical Friedel-Crafts alkylation of quinolinone B with dimethylallyl cation to yield dimethylallyl quinolone, which is subjected to FAD-dependent dehydrogenation by the FAD-linked oxidoreductase penH to yield conjugated aryl diene. The delta(3') double bond then serves as the site of the second alkylation with DMAPP catalyzed by the prenyltransferase penG to yield a carbenium ion intermediate, which can be attacked by H(2)O to yield a styrenyl quinolone containing a C3'-hydroxyprenyl chain, or undergo cyclization to yield yaequinolones J1 and J2. The conversion of the styrenyl quinolone into the tetrahydrofuran-containing yaequinolone C is performed by the FAD-dependent monooxygenase penE and involves epoxidation of the terminal C7'-C8' olefin, followed by epoxide ring opening initiated by the C3' hydroxyl group. The predicted cysteine hydrolase penJ acts as an epoxide hydrolase that enhances the rate of the 5-exo-tet cyclization step, increasing the yield of yaequinolone C. PenF catalyzes the cationic rearrangement of the epoxide formed by penE (before ring opening to produce yaequinolone C) into yaequinolone D. Finally, the short-chain dehydrogenase/reductase (SDR)-like reductase penD, catalyzes both the dehydration of yaequinolone D and the reduction of the resulting oxonium to yield penigequinolone. This Penicillium thymicola protein is Nonribosomal peptide synthetase penN.